The sequence spans 1132 residues: Serine/threonine-protein kinase spk-1 (1132 aa).

Residues 75–95 traverse the membrane as a helical segment; sequence GGSLILTDIFPTVLFMFVVLF. 2 disordered regions span residues 240–388 and 419–481; these read NEDQ…DSDD and NKKA…KRGG. Acidic residues-rich tracts occupy residues 281 to 290 and 311 to 336; these read SEDEDVESQE and DEPI…LGDE. Low complexity predominate over residues 362–372; that stretch reads DSSVSSSTSST. Over residues 373–388 the composition is skewed to acidic residues; it reads PDDDEDDSATSYDSDD. Basic and acidic residues predominate over residues 421–433; it reads KAEVNANEERMDD. Residues 434–443 are compositionally biased toward low complexity; sequence VSVSPGRSDS. The 550-residue stretch at 495–1044 folds into the Protein kinase domain; the sequence is YHVIRKLGWG…ANDALKHPFL (550 aa). ATP contacts are provided by residues 501 to 509 and K524; that span reads LGWGHFSTV. D628 functions as the Proton acceptor in the catalytic mechanism. The tract at residues 1066–1121 is disordered; it reads QVPEALDGNQEVYRDENDSNSASERSANRSAGSDDEEEFHMDRPGPSGVINEPADV. The segment covering 1084 to 1096 has biased composition (low complexity); sequence SNSASERSANRSA.

Belongs to the protein kinase superfamily. Ser/Thr protein kinase family.

It is found in the membrane. It catalyses the reaction L-seryl-[protein] + ATP = O-phospho-L-seryl-[protein] + ADP + H(+). The catalysed reaction is L-threonyl-[protein] + ATP = O-phospho-L-threonyl-[protein] + ADP + H(+). Functionally, required for embryogenesis and germline development in both adult hermaphrodites and males. SR-protein kinase (SRPK) that binds directly to and phosphorylates RS domains. The polypeptide is Serine/threonine-protein kinase spk-1 (spk-1) (Caenorhabditis briggsae).